A 417-amino-acid chain; its full sequence is Gamma-glutamyl phosphate reductase (417 aa).

This sequence belongs to the gamma-glutamyl phosphate reductase family.

It localises to the cytoplasm. The catalysed reaction is L-glutamate 5-semialdehyde + phosphate + NADP(+) = L-glutamyl 5-phosphate + NADPH + H(+). Its pathway is amino-acid biosynthesis; L-proline biosynthesis; L-glutamate 5-semialdehyde from L-glutamate: step 2/2. Its function is as follows. Catalyzes the NADPH-dependent reduction of L-glutamate 5-phosphate into L-glutamate 5-semialdehyde and phosphate. The product spontaneously undergoes cyclization to form 1-pyrroline-5-carboxylate. The protein is Gamma-glutamyl phosphate reductase of Klebsiella pneumoniae (strain 342).